A 229-amino-acid polypeptide reads, in one-letter code: N-(5'-phosphoribosyl)anthranilate isomerase (229 aa).

This sequence belongs to the TrpF family.

It catalyses the reaction N-(5-phospho-beta-D-ribosyl)anthranilate = 1-(2-carboxyphenylamino)-1-deoxy-D-ribulose 5-phosphate. Its pathway is amino-acid biosynthesis; L-tryptophan biosynthesis; L-tryptophan from chorismate: step 3/5. This Clostridium beijerinckii (strain ATCC 51743 / NCIMB 8052) (Clostridium acetobutylicum) protein is N-(5'-phosphoribosyl)anthranilate isomerase.